Consider the following 103-residue polypeptide: Small ribosomal subunit protein uS14c (103 aa).

Residues 34-56 (KVSPLSLSEKTKMREKLQSLPRN) form a disordered region.

It belongs to the universal ribosomal protein uS14 family. As to quaternary structure, part of the 30S ribosomal subunit.

It localises to the plastid. It is found in the chloroplast. Functionally, binds 16S rRNA, required for the assembly of 30S particles. The polypeptide is Small ribosomal subunit protein uS14c (Brachypodium distachyon (Purple false brome)).